Here is a 389-residue protein sequence, read N- to C-terminus: UDP-GlcNAc:betaGal beta-1,3-N-acetylglucosaminyltransferase 8 (389 aa).

Residues 1–7 (MRCRKCQ) lie on the Cytoplasmic side of the membrane. A helical; Signal-anchor for type II membrane protein transmembrane segment spans residues 8–24 (LCLSALLTLLGLKVYIE). Residues 25–389 (WTSESWLKKA…RHLWVPELQC (365 aa)) are Lumenal-facing. The disordered stretch occupies residues 36–57 (PRGALPSPTPPNAEPTLPTNLS). N-linked (GlcNAc...) asparagine glycans are attached at residues asparagine 55 and asparagine 212.

The protein belongs to the glycosyltransferase 31 family. Interacts with B3GNT2; this interaction greatly increases B3GNT2 catalytic activity, independently of B3GNT8 enzymatic activity.

It localises to the golgi apparatus membrane. It participates in protein modification; protein glycosylation. Beta-1,3-N-acetylglucosaminyltransferase that plays a role in the elongation of specific branch structures of multiantennary N-glycans. Has strong activity towards tetraantennary N-glycans and 2,6 triantennary glycans. This is UDP-GlcNAc:betaGal beta-1,3-N-acetylglucosaminyltransferase 8 from Mus musculus (Mouse).